The sequence spans 793 residues: MAGWIQAQQLQGDALRQMQVLYGQHFPIEVRHYLAQWIESQPWDAIDLDNPQDRGQATQLLEGLVQELQKKAEHQVGEDGFVLKIKLGHYATQLQNTYDRCPMELVRCIRHILYNEQRLVREANNCSSPAGVLVDAMSQKHLQINQTFEELRLITQDTESELKKLQQTQEYFIIQYQESLRIQAQFGQLAQLNPQERMSRETALQQKQVSLETWLQREAQTLQQYRVELVEKHQKTLQLLRKQQTIILDDELIQWKRGQQLAGNGGPPEGSLDVLQSWCEKLAEIIWQNRQQIRRAEHLCQQLPIPGPVEEMLAEVNATITDIISALVTSTFIIEKQPPQVLKTQTKFAATVRLLVGGKLNVHMNPPQVKATIISEQQAKSLLKNENTRNDYSGEILNNCCVMEYHQATGTLSAHFRNMSLKRIKRADRRGAESVTEEKFTVLFESQFSVGSNELVFQVKTLSLPVVVIVHGSQDHNATATVLWDNAFAEPGRVPFAVPDKVLWPQLCEALNMKFKAEVQSNRGLTKENLVFLAQKLFNRRSNHLEDYNSMSVSWSQFNRENLPGWNYTFWQWFDGVMEVLKKHHKPHWNDGAILGFVNKQQAHDLLINKPDGTFLLRFSDSEIGGITIAWKFDSPDRNLWNLKPFTTRDFSIRSLADRLGDLNYLIYVFPDRPKDEVFAKYYTPVLAKAVDGYVKPQIKQVVPEFVNASADAGANATYMDQAPSPVVCPQAHYNMYPPNPDPVLDQDGEFDLDETMDVARHVEELLRRPMDSLDPRLSPPAGLFTSARSSLS.

The residue at position 90 (Tyr-90) is a Phosphotyrosine. Position 128 is a phosphoserine (Ser-128). In terms of domain architecture, SH2 spans Trp-589–Val-686. The residue at position 682 (Tyr-682) is a Phosphotyrosine. Tyr-694 bears the Phosphotyrosine; by JAK2 mark. A disordered region spans residues Asp-772–Ser-793. Ser-779 is modified (phosphoserine).

The protein belongs to the transcription factor STAT family. In terms of assembly, forms a homodimer or a heterodimer with a related family member. Binds NR3C1. Interacts with NCOA1 and SOCS7. Interacts with ERBB4. Interacts with EBF4. Post-translationally, ISGylated. In terms of processing, tyrosine phosphorylated in response to KITLG/SCF, IL2, IL3, IL7, IL15, CSF2/GMCSF, GH1, PRL, EPO and THPO. Activated KIT promotes phosphorylation on tyrosine residues and subsequent translocation to the nucleus. Tyrosine phosphorylated in response to constitutively activated FGFR1, FGFR2, FGFR3 and FGFR4. Tyrosine phosphorylation is required for DNA-binding activity and dimerization. Serine phosphorylation is also required for maximal transcriptional activity. Tyrosine phosphorylated in response to signaling via activated FLT3; wild-type FLT3 results in much weaker phosphorylation than constitutively activated mutant FLT3. Alternatively, can be phosphorylated by JAK2 at Tyr-694. As to expression, expressed in heart, lung, and weakly in muscle.

It localises to the cytoplasm. It is found in the nucleus. In terms of biological role, carries out a dual function: signal transduction and activation of transcription. Mediates cellular responses to the cytokine KITLG/SCF and other growth factors. May mediate cellular responses to activated FGFR1, FGFR2, FGFR3 and FGFR4. Binds to the GAS element and activates PRL-induced transcription. Regulates the expression of milk proteins during lactation. The polypeptide is Signal transducer and activator of transcription 5A (Stat5a) (Rattus norvegicus (Rat)).